Consider the following 189-residue polypeptide: Peptidyl-tRNA hydrolase (189 aa).

Y15 is a binding site for tRNA. H20 serves as the catalytic Proton acceptor. TRNA contacts are provided by F66, N68, and N114.

This sequence belongs to the PTH family. Monomer.

It localises to the cytoplasm. It catalyses the reaction an N-acyl-L-alpha-aminoacyl-tRNA + H2O = an N-acyl-L-amino acid + a tRNA + H(+). Hydrolyzes ribosome-free peptidyl-tRNAs (with 1 or more amino acids incorporated), which drop off the ribosome during protein synthesis, or as a result of ribosome stalling. Functionally, catalyzes the release of premature peptidyl moieties from peptidyl-tRNA molecules trapped in stalled 50S ribosomal subunits, and thus maintains levels of free tRNAs and 50S ribosomes. The protein is Peptidyl-tRNA hydrolase of Streptococcus equi subsp. zooepidemicus (strain H70).